The sequence spans 334 residues: Formamidase (334 aa).

The CN hydrolase domain maps to 14 to 260 (FLVAAIQFPV…WEIVTGEIYP (247 aa)). The Proton acceptor role is filled by Glu60. Lys133 acts as the Proton donor in catalysis. The active-site Nucleophile is the Cys166.

This sequence belongs to the carbon-nitrogen hydrolase superfamily. Aliphatic amidase family.

It catalyses the reaction formamide + H2O = formate + NH4(+). Its function is as follows. Is an aliphatic amidase with a restricted substrate specificity, as it only hydrolyzes formamide. The protein is Formamidase of Helicobacter pylori (strain G27).